Consider the following 417-residue polypeptide: Glutamyl-tRNA reductase (417 aa).

Substrate contacts are provided by residues 48–51 (TCNR), Ser-100, 105–107 (EDQ), and Gln-111. Cys-49 acts as the Nucleophile in catalysis. Residue 180–185 (GAGETG) participates in NADP(+) binding.

This sequence belongs to the glutamyl-tRNA reductase family. In terms of assembly, homodimer.

It carries out the reaction (S)-4-amino-5-oxopentanoate + tRNA(Glu) + NADP(+) = L-glutamyl-tRNA(Glu) + NADPH + H(+). It participates in porphyrin-containing compound metabolism; protoporphyrin-IX biosynthesis; 5-aminolevulinate from L-glutamyl-tRNA(Glu): step 1/2. In terms of biological role, catalyzes the NADPH-dependent reduction of glutamyl-tRNA(Glu) to glutamate 1-semialdehyde (GSA). In Methanothrix thermoacetophila (strain DSM 6194 / JCM 14653 / NBRC 101360 / PT) (Methanosaeta thermophila), this protein is Glutamyl-tRNA reductase.